A 68-amino-acid polypeptide reads, in one-letter code: Molybdenum-pterin-binding protein 1 (68 aa).

The region spanning 2 to 68 (SISARNQLKG…IKSTDVMILA (67 aa)) is the Mop domain.

Its function is as follows. Binds one mole of molybdenum per mole of protein and contains a pterin. The chain is Molybdenum-pterin-binding protein 1 (mopI) from Clostridium pasteurianum.